Here is a 388-residue protein sequence, read N- to C-terminus: Chorismate synthase (388 aa).

The NADP(+) site is built by Arg-39 and Arg-45. The tract at residues 95–118 (EKNEKSRRVSRPRPGHADLVGGMK) is disordered. Residues 130–132 (RSS), 251–252 (NA), Gly-296, 311–315 (KPIPT), and Arg-337 each bind FMN.

Belongs to the chorismate synthase family. Homotetramer. It depends on FMNH2 as a cofactor.

The enzyme catalyses 5-O-(1-carboxyvinyl)-3-phosphoshikimate = chorismate + phosphate. The protein operates within metabolic intermediate biosynthesis; chorismate biosynthesis; chorismate from D-erythrose 4-phosphate and phosphoenolpyruvate: step 7/7. Its function is as follows. Catalyzes the anti-1,4-elimination of the C-3 phosphate and the C-6 proR hydrogen from 5-enolpyruvylshikimate-3-phosphate (EPSP) to yield chorismate, which is the branch point compound that serves as the starting substrate for the three terminal pathways of aromatic amino acid biosynthesis. This reaction introduces a second double bond into the aromatic ring system. This is Chorismate synthase from Listeria monocytogenes serotype 4b (strain F2365).